A 251-amino-acid polypeptide reads, in one-letter code: Ubiquinone/menaquinone biosynthesis C-methyltransferase UbiE (251 aa).

S-adenosyl-L-methionine contacts are provided by residues Thr74, Asp95, 123–124, and Ser140; that span reads NA.

It belongs to the class I-like SAM-binding methyltransferase superfamily. MenG/UbiE family.

It carries out the reaction a 2-demethylmenaquinol + S-adenosyl-L-methionine = a menaquinol + S-adenosyl-L-homocysteine + H(+). The enzyme catalyses a 2-methoxy-6-(all-trans-polyprenyl)benzene-1,4-diol + S-adenosyl-L-methionine = a 5-methoxy-2-methyl-3-(all-trans-polyprenyl)benzene-1,4-diol + S-adenosyl-L-homocysteine + H(+). It functions in the pathway quinol/quinone metabolism; menaquinone biosynthesis; menaquinol from 1,4-dihydroxy-2-naphthoate: step 2/2. It participates in cofactor biosynthesis; ubiquinone biosynthesis. Methyltransferase required for the conversion of demethylmenaquinol (DMKH2) to menaquinol (MKH2) and the conversion of 2-polyprenyl-6-methoxy-1,4-benzoquinol (DDMQH2) to 2-polyprenyl-3-methyl-6-methoxy-1,4-benzoquinol (DMQH2). This Enterobacter sp. (strain 638) protein is Ubiquinone/menaquinone biosynthesis C-methyltransferase UbiE.